A 773-amino-acid chain; its full sequence is Histone-lysine N-methyltransferase mes-2 (773 aa).

Polar residues predominate over residues 1 to 13; that stretch reads MSNSEPSTSTPSG. The tract at residues 1 to 33 is disordered; the sequence is MSNSEPSTSTPSGKTKKRGKKCETSMGKSKKSK. The interaction with mes-6 stretch occupies residues 1-194; the sequence is MSNSEPSTST…TPDQLRLTHM (194 aa). The CXC domain maps to 505-614; it reads IREDDMRDSQ…SNIIKCRNFG (110 aa). In terms of domain architecture, SET spans 616-737; it reads TRMIQKRTYC…ISEELTFDYS (122 aa). Positions 749 to 773 are disordered; sequence VQTKERSEKPSRPKSQKLSKPMTSE. Residues 750-759 show a composition bias toward basic and acidic residues; that stretch reads QTKERSEKPS.

The protein belongs to the class V-like SAM-binding methyltransferase superfamily. Histone-lysine methyltransferase family. EZ subfamily. In terms of assembly, interacts directly with mes-6 via its N-terminal domain. Forms a heterotrimeric complex with mes-3 and mes-6. Does not interact with mes-4. In adults, it is predominantly expressed in the germline, and weakly expressed in intestinal cells. Expressed in the hypoderm.

Its subcellular location is the nucleus. It catalyses the reaction L-lysyl(27)-[histone H3] + 3 S-adenosyl-L-methionine = N(6),N(6),N(6)-trimethyl-L-lysyl(27)-[histone H3] + 3 S-adenosyl-L-homocysteine + 3 H(+). Its function is as follows. Polycomb group (PcG) protein. Catalytic subunit of a the mes-2/mes-3/mes-6 complex, which methylates 'Lys-27' of histone H3, leading to transcriptional repression of the affected target genes. PcG proteins act by forming multiprotein complexes, which are required to maintain the transcriptionally repressive state of homeotic genes throughout development. In association with the nfya-1-NF-Y complex, may play a role in repressing the expression of the homeobox protein egl-5 in tissues such as the head. PcG proteins are not required to initiate repression, but to maintain it during later stages of development. The mes-2/mes-3/mes-6 complex may participate in the global inactivation of the X chromosomes in germline cells. This complex is required to exclude mes-4 from the inactivated X-chromosomes in germline cells. Required for small-RNA-induced H3K27 trimethylation. Involved in the negative regulation of lifespan in a germline-independent fashion. This chain is Histone-lysine N-methyltransferase mes-2, found in Caenorhabditis elegans.